The following is a 478-amino-acid chain: Lysine-rich nucleolar protein 1 (478 aa).

Positions 1–231 (MVSKTQKADL…THQEGDILLV (231 aa)) are disordered. A Glycyl lysine isopeptide (Lys-Gly) (interchain with G-Cter in SUMO2) cross-link involves residue lysine 7. Positions 17–27 (KKKKKKKKKRV) are enriched in basic residues. Residues 33–45 (EPETQYSVLNSND) show a composition bias toward polar residues. 2 positions are modified to phosphoserine: serine 51 and serine 59. Polar residues predominate over residues 54-63 (RATSPSNNVD). 2 stretches are compositionally biased toward basic residues: residues 73–82 (SKRKKKKKSC) and 120–129 (EKKKKRRKSL). Lysine 140 is covalently cross-linked (Glycyl lysine isopeptide (Lys-Gly) (interchain with G-Cter in SUMO2)). At serine 142 the chain carries Phosphoserine. Residues 143-153 (PDPKHAKEVSK) are compositionally biased toward basic and acidic residues. Composition is skewed to basic residues over residues 154-165 (AGRKSKKQRKEK) and 204-222 (QKRK…KKKT). Lysine 250 is covalently cross-linked (Glycyl lysine isopeptide (Lys-Gly) (interchain with G-Cter in SUMO1); alternate). Lysine 250 is covalently cross-linked (Glycyl lysine isopeptide (Lys-Gly) (interchain with G-Cter in SUMO2); alternate). A disordered region spans residues 258 to 314 (PIDSPKAPGKKKVKSKKKVEQPVGEGLAVKRKKKKKKRKENGVKEDPWQEEKEESDT). Serine 261 is modified (phosphoserine). A compositionally biased stretch (basic residues) spans 265-274 (PGKKKVKSKK). Glycyl lysine isopeptide (Lys-Gly) (interchain with G-Cter in SUMO2) cross-links involve residues lysine 275 and lysine 287. Basic residues predominate over residues 286–296 (VKRKKKKKKRK). Positions 297-307 (ENGVKEDPWQE) are enriched in basic and acidic residues. Residue lysine 309 forms a Glycyl lysine isopeptide (Lys-Gly) (interchain with G-Cter in SUMO2) linkage. Residues 310–478 (EESDTDLEVV…NASKSIKLQD (169 aa)) are interaction with ZNF106. Residue serine 312 is modified to Phosphoserine. Threonine 314 is modified (phosphothreonine). A Glycyl lysine isopeptide (Lys-Gly) (interchain with G-Cter in SUMO2) cross-link involves residue lysine 323. Over residues 340 to 357 (QEEIDRESGKTEASEPKK) the composition is skewed to basic and acidic residues. Residues 340-378 (QEEIDRESGKTEASEPKKWTVGLSVKTEASEPKKWTGTQ) form a disordered region. Residues lysine 373, lysine 393, lysine 395, lysine 427, and lysine 462 each participate in a glycyl lysine isopeptide (Lys-Gly) (interchain with G-Cter in SUMO2) cross-link.

In terms of assembly, interacts with ZNF106. As to expression, expressed in testis.

The protein localises to the nucleus. It localises to the nucleolus. This is Lysine-rich nucleolar protein 1 (Knop1) from Mus musculus (Mouse).